We begin with the raw amino-acid sequence, 440 residues long: Adenylosuccinate synthetase (440 aa).

GTP contacts are provided by residues Gly12–Lys18 and Gly40–Thr42. The active-site Proton acceptor is Asp13. The Mg(2+) site is built by Asp13 and Gly40. Residues Asp13 to Lys16, Asn38 to His41, Thr128, Arg142, Gln223, Thr238, and Arg302 each bind IMP. The active-site Proton donor is the His41. Thr298–Arg304 serves as a coordination point for substrate. GTP-binding positions include Arg304, Lys330–Asp332, and Ser412–Gly414.

This sequence belongs to the adenylosuccinate synthetase family. In terms of assembly, homodimer. The cofactor is Mg(2+).

Its subcellular location is the cytoplasm. The catalysed reaction is IMP + L-aspartate + GTP = N(6)-(1,2-dicarboxyethyl)-AMP + GDP + phosphate + 2 H(+). Its pathway is purine metabolism; AMP biosynthesis via de novo pathway; AMP from IMP: step 1/2. Functionally, plays an important role in the de novo pathway of purine nucleotide biosynthesis. Catalyzes the first committed step in the biosynthesis of AMP from IMP. In Gloeobacter violaceus (strain ATCC 29082 / PCC 7421), this protein is Adenylosuccinate synthetase.